A 784-amino-acid polypeptide reads, in one-letter code: Cadherin-15 (784 aa).

Positions 1-21 (MGSALLLALGLLAQSLGLSWA) are cleaved as a signal peptide. A propeptide spanning residues 22-59 (VPEPKPSTLYPWRRASAPGRVRRAWVIPPISVSENHKR) is cleaved from the precursor. 5 Cadherin domains span residues 60-151 (LPYP…RPAF), 152-259 (LQDV…APEF), 260-374 (TKDE…APVF), 375-480 (PENP…DHAP), and 481-589 (ALAL…TCLP). Topologically, residues 60–605 (LPYPLVQIKS…GGGVGVSLGA (546 aa)) are extracellular. N-linked (GlcNAc...) asparagine glycans are attached at residues Asn106 and Asn226. Asn530, Asn537, and Asn575 each carry an N-linked (GlcNAc...) asparagine glycan. A helical membrane pass occupies residues 606–625 (LVIVLASTVVLLVLILLAAL). Topologically, residues 626–784 (RTRFRGHSRG…ARLADMYGHQ (159 aa)) are cytoplasmic. The segment at 676–700 (EPRATSRSLGRPPLRRDAPFSYVPQ) is disordered.

In terms of tissue distribution, skeletal muscle.

It localises to the cell membrane. Its function is as follows. Cadherins are calcium-dependent cell adhesion proteins. They preferentially interact with themselves in a homophilic manner in connecting cells; cadherins may thus contribute to the sorting of heterogeneous cell types. M-cadherin is part of the myogenic program and may provide a trigger for terminal muscle differentiation. This chain is Cadherin-15 (Cdh15), found in Mus musculus (Mouse).